The following is a 321-amino-acid chain: Beta-ketoacyl-[acyl-carrier-protein] synthase III (321 aa).

Residues C113 and H248 contribute to the active site. The segment at 249 to 253 (QANAR) is ACP-binding. Residue N278 is part of the active site.

The protein belongs to the thiolase-like superfamily. FabH family. As to quaternary structure, homodimer.

Its subcellular location is the cytoplasm. The catalysed reaction is malonyl-[ACP] + acetyl-CoA + H(+) = 3-oxobutanoyl-[ACP] + CO2 + CoA. It functions in the pathway lipid metabolism; fatty acid biosynthesis. In terms of biological role, catalyzes the condensation reaction of fatty acid synthesis by the addition to an acyl acceptor of two carbons from malonyl-ACP. Catalyzes the first condensation reaction which initiates fatty acid synthesis and may therefore play a role in governing the total rate of fatty acid production. Possesses both acetoacetyl-ACP synthase and acetyl transacylase activities. Its substrate specificity determines the biosynthesis of branched-chain and/or straight-chain of fatty acids. This is Beta-ketoacyl-[acyl-carrier-protein] synthase III from Erythrobacter litoralis (strain HTCC2594).